Reading from the N-terminus, the 316-residue chain is MLP-like protein 34 (316 aa).

This sequence belongs to the MLP family.

This chain is MLP-like protein 34 (MLP34), found in Arabidopsis thaliana (Mouse-ear cress).